A 373-amino-acid chain; its full sequence is MEFKLKHKDGMARVCEITTAHSTFLTPVFMPVGTVGAVKSLDANDMKNELDAKIILANTYHMYLRPTSKVVKDFGGLHGFTKFDRSFLTDSGGFQAFSLSKNSKHFNEGIEFKSHIDGSRHLFTPKSVLDTQYDFNSDIMMILDDLVALPATKERVKISVDRTILWAKEAITYHKSMQNKGIGIGQNIFGIIQGGTDYKERKRCALSLNEMPFDGLAIGGLSVGEENALMYETVQNLNPYLDENRPRYLMGVGTPEDLVENVERGVDMFDCVMPTRNARNGTFFTSFGKFNIKKAEFINDHEAIDPACSCYTCCNFSRGYLNHLFKAKELTFFRLASLHNLHYYLELARKMREAILNNSFTQFKRNFYHLRGK.

Aspartate 90 functions as the Proton acceptor in the catalytic mechanism. Residues aspartate 90–phenylalanine 94, aspartate 144, glutamine 193, and glycine 220 each bind substrate. Positions glycine 251 to aspartate 257 are RNA binding. Aspartate 270 serves as the catalytic Nucleophile. The RNA binding; important for wobble base 34 recognition stretch occupies residues threonine 275–arginine 279. Positions 308, 310, 313, and 339 each coordinate Zn(2+).

Belongs to the queuine tRNA-ribosyltransferase family. As to quaternary structure, homodimer. Within each dimer, one monomer is responsible for RNA recognition and catalysis, while the other monomer binds to the replacement base PreQ1. Zn(2+) is required as a cofactor.

It catalyses the reaction 7-aminomethyl-7-carbaguanine + guanosine(34) in tRNA = 7-aminomethyl-7-carbaguanosine(34) in tRNA + guanine. Its pathway is tRNA modification; tRNA-queuosine biosynthesis. Functionally, catalyzes the base-exchange of a guanine (G) residue with the queuine precursor 7-aminomethyl-7-deazaguanine (PreQ1) at position 34 (anticodon wobble position) in tRNAs with GU(N) anticodons (tRNA-Asp, -Asn, -His and -Tyr). Catalysis occurs through a double-displacement mechanism. The nucleophile active site attacks the C1' of nucleotide 34 to detach the guanine base from the RNA, forming a covalent enzyme-RNA intermediate. The proton acceptor active site deprotonates the incoming PreQ1, allowing a nucleophilic attack on the C1' of the ribose to form the product. After dissociation, two additional enzymatic reactions on the tRNA convert PreQ1 to queuine (Q), resulting in the hypermodified nucleoside queuosine (7-(((4,5-cis-dihydroxy-2-cyclopenten-1-yl)amino)methyl)-7-deazaguanosine). This chain is Queuine tRNA-ribosyltransferase, found in Campylobacter jejuni subsp. jejuni serotype O:6 (strain 81116 / NCTC 11828).